Reading from the N-terminus, the 205-residue chain is Metal-independent carbonic anhydrase (205 aa).

The N-terminal stretch at 1 to 24 (MNLFKPRILVLFAATALISGIAIV) is a signal peptide. The hydrogencarbonate site is built by Thr106 and Tyr124.

The protein belongs to the iota-class carbonic anhydrase family. Homotetramer; dimer of dimers. Requires Does not require a metal cofactor. as cofactor.

It carries out the reaction hydrogencarbonate + H(+) = CO2 + H2O. Activity is not affected by EDTA or 2,6-pyridinedicarboxylic acid (PDA). Activity is not affected by addition of most divalent metal ions, except zinc ions which decrease the activity. Inhibited by the iodide ion. Its function is as follows. Catalyzes the hydration of carbon dioxide (CO2) to bicarbonate (HCO3(-)). Has only very low bicarbonate dehydration activity. May function even in metal-poor environments. The protein is Metal-independent carbonic anhydrase of Nostoc sp. (strain PCC 7120 / SAG 25.82 / UTEX 2576).